The chain runs to 149 residues: Nucleoside diphosphate kinase (149 aa).

Residues lysine 9, phenylalanine 57, arginine 85, threonine 91, arginine 102, and asparagine 112 each coordinate ATP. The active-site Pros-phosphohistidine intermediate is the histidine 115.

It belongs to the NDK family. Homotetramer. Mg(2+) serves as cofactor.

It localises to the cytoplasm. The catalysed reaction is dZDP + ATP = dZTP + ADP. The enzyme catalyses a 2'-deoxyribonucleoside 5'-diphosphate + ATP = a 2'-deoxyribonucleoside 5'-triphosphate + ADP. It catalyses the reaction a ribonucleoside 5'-diphosphate + ATP = a ribonucleoside 5'-triphosphate + ADP. The protein operates within purine metabolism. In terms of biological role, major role in the synthesis of nucleoside triphosphates other than ATP. The ATP gamma phosphate is transferred to the NDP beta phosphate via a ping-pong mechanism, using a phosphorylated active-site intermediate. Its function is as follows. (Microbial infection) Catalyzes the phosphorylation of dZDP to dZTP, when the bacterium is infected by a phage that produces the substrate for the synthesis of dZTP (2- amino-2'-deoxyadenosine 5'-triphosphate), which is then used by the phage as a DNA polymerase substrate. This is Nucleoside diphosphate kinase from Synechococcus sp. (strain JA-3-3Ab) (Cyanobacteria bacterium Yellowstone A-Prime).